The sequence spans 452 residues: GPI mannosyltransferase 2 (452 aa).

Residues 1–7 (MMEKVTK) are Cytoplasmic-facing. Residues 8–28 (LALTSRVMVLVVQLLANFATP) traverse the membrane as a helical segment. Over 29 to 113 (DHKPDVFRMP…HLGIPLSRDA (85 aa)) the chain is Lumenal. A helical membrane pass occupies residues 114–134 (LILLVAVALNVLIFCKTANVL). At 135–161 (YKLTQRMFNDHNKSWNAALIFCFNPAS) the chain is on the cytoplasmic side. A helical transmembrane segment spans residues 162-182 (IFFSAAYSETFFAFASFSLML). At 183 to 209 (ECMRSEKDFRTFRLGAALTGCFVCRSN) the chain is on the lumenal side. The helical transmembrane segment at 210–230 (GLLTLGFPLYFLARHILLSTG) threads the bilayer. At 231 to 238 (SVQRCWQL) the chain is on the cytoplasmic side. Residues 239–259 (FKMGLAMLVALGILHTYYFYI) traverse the membrane as a helical segment. Over 260 to 284 (YRLYCLPDVKVQHAQHVVDYAKERS) the chain is Lumenal. Residues 285–305 (FLISGQASVGSPWCGYTLPFP) traverse the membrane as a helical segment. The Cytoplasmic portion of the chain corresponds to 306 to 327 (YTYVQSHYWDVGFLRYYKWKQL). A helical membrane pass occupies residues 328–348 (PNFLLALPMLLFMHWHCYDYI). Residues 349–370 (RKLVANTWSKISPSEYQGILKE) are Lumenal-facing. The chain crosses the membrane as a helical span at residues 371 to 391 (HISFPFVLHAAVLTLVCTLYV). Over 392 to 398 (HIQVSTR) the chain is Cytoplasmic. The helical transmembrane segment at 399 to 419 (LLASATPVFYWFAADYMPNTF) threads the bilayer. At 420 to 426 (QLSFRSK) the chain is on the lumenal side. Residues 427–447 (AGVLFIWCLTYSLVGTVLFSN) traverse the membrane as a helical segment. Residues 448–452 (NYPWT) lie on the Cytoplasmic side of the membrane.

This sequence belongs to the PIGV family.

It is found in the endoplasmic reticulum membrane. It functions in the pathway glycolipid biosynthesis; glycosylphosphatidylinositol-anchor biosynthesis. Its function is as follows. Mannosyltransferase involved in glycosylphosphatidylinositol-anchor biosynthesis. Transfers the second mannose to the glycosylphosphatidylinositol during GPI precursor assembly. Required for the GPI-mediated endoplasmic reticulum exit and proper targeting to the cell surface of chp. Required for GPI-mediated membrane attachment of chp, qsm and Cont. Essential for microvillar stability in the rhabdomere. The chain is GPI mannosyltransferase 2 from Drosophila pseudoobscura pseudoobscura (Fruit fly).